Reading from the N-terminus, the 145-residue chain is Secreted LysM effector Vd2LysM (145 aa).

A signal peptide spans 1 to 18; it reads MRPDVFVLFTAFLGPAAA. 2 consecutive LysM domains span residues 31-75 and 96-140; these read GWYI…KIKV and GWYH…DIVV.

It belongs to the secreted LysM effector family. Forms homodimers in a chitin-independent manner through interactions at the N-termini of EPL2 monomers. Homodimers are further polymerized in a chitin-dependent manner.

Functionally, secreted effector that enables the plant pathogenic fungus to manipulate host defenses for successful infection. Binds chitin, suppresses chitin-induced immune responses and protects hyphae against degradation by plant hydrolytic enzymes. Chitin-induced polymerization of homodimers forms a contiguous ELP2 highly oligomeric super-complexe that may precipitate at infection sites to eliminate chitin oligomers, and thus suppress the activation of chitin-induced plant immunity. This is Secreted LysM effector Vd2LysM from Verticillium dahliae (strain VdLs.17 / ATCC MYA-4575 / FGSC 10137) (Verticillium wilt).